Reading from the N-terminus, the 335-residue chain is D-alanine--D-alanine ligase (335 aa).

In terms of domain architecture, ATP-grasp spans 124-330; sequence KMWFSALGVP…FTEYLSDVIS (207 aa). 154–209 is an ATP binding site; the sequence is AFDTWGSVFIKAASQGSSVGCYKVDVRDNIAKVLEEAFGYAPYVVVEKTIKARELE. Mg(2+) is bound by residues D284, E297, and N299.

Belongs to the D-alanine--D-alanine ligase family. Requires Mg(2+) as cofactor. Mn(2+) is required as a cofactor.

The protein resides in the cytoplasm. It carries out the reaction 2 D-alanine + ATP = D-alanyl-D-alanine + ADP + phosphate + H(+). The protein operates within cell wall biogenesis; peptidoglycan biosynthesis. Its function is as follows. Cell wall formation. This is D-alanine--D-alanine ligase from Shewanella denitrificans (strain OS217 / ATCC BAA-1090 / DSM 15013).